Reading from the N-terminus, the 243-residue chain is MDQYCILGRIGEGAHGIVFKAKHVETGEIVALKKVALRRLEDGFPNQALREIKALQEMGDNQYVVQLKAVFPHGGGFVLAFEFMLSDLAEVVRHAQRPLAQAQVKSYLQMLLKGVAFCHANNIVHRDLKPANLLISASGQLKIADFGLARVFSPDGSRLYTHQVATRSSLSCRTTTRSPLRSRCPCPWRRCCLTSLPRHWICWVNSFSTLLTSASQLPRLSSISTSSQLPCLPIHLSCRFLSV.

The 240-residue stretch at 4–243 (YCILGRIGEG…IHLSCRFLSV (240 aa)) folds into the Protein kinase domain. ATP-binding positions include 10–18 (IGEGAHGIV) and Lys-33. Asp-127 acts as the Proton acceptor in catalysis.

The protein belongs to the protein kinase superfamily. CMGC Ser/Thr protein kinase family. CDC2/CDKX subfamily. Monomer. Interacts with TBC1D32 and MAK.

Its subcellular location is the nucleus. It is found in the cytoplasm. It localises to the cell projection. The protein resides in the cilium. The catalysed reaction is L-seryl-[protein] + ATP = O-phospho-L-seryl-[protein] + ADP + H(+). It carries out the reaction L-threonyl-[protein] + ATP = O-phospho-L-threonyl-[protein] + ADP + H(+). Its function is as follows. Required for high-level Shh responses in the developing neural tube. Together with TBC1D32, controls the structure of the primary cilium by coordinating assembly of the ciliary membrane and axoneme, allowing GLI2 to be properly activated in response to SHH signaling. Involved in cell growth. Activates CDK2, a kinase involved in the control of the cell cycle, by phosphorylating residue 'Thr-160'. The polypeptide is Cyclin-dependent kinase 20 (CDK20) (Macaca mulatta (Rhesus macaque)).